A 188-amino-acid chain; its full sequence is FMN-dependent NADPH-azoreductase (188 aa).

This sequence belongs to the azoreductase type 2 family. In terms of assembly, homotetramer. FMN is required as a cofactor.

In terms of biological role, catalyzes the reductive cleavage of azo bond in aromatic azo compounds to the corresponding amines. Requires NADPH, but not NADH, as an electron donor for its activity. This Staphylococcus aureus (strain MSSA476) protein is FMN-dependent NADPH-azoreductase (azo1).